The sequence spans 863 residues: MNGEQQLDADLGSGVEVEEFSWEDYLEETGATTAPYASFKHVDICLQSGFAPGMKLEVALRKDPETYWVATVITACEQLLLLRYEGYGEDRKADFWCDIRRAGLYPIGWCQQNKKTLEAPEGIRDKVSDWSAFLQRTLTGACGPPVALLEGLRNGRNPLDLIAPGSRLECQDFRDSVSTWIVTVVENIGGRLKLQYEGLERHDGFEHWLYYLDPFLHHIGWAAQQGYELQPPLAIRHLKNEADWQEILARVKEEEPLPSYLFKDKQVIRTHEFSINMKLEAVDPWSPFGISPATIAKVFDDKYFLVEIDDLRPEDHARRSFVCHANSPGIFPVQWSLKNGLHINPPPGFRSQDFDWADYLKQCGAEAAPQKCFPQSVSEHQFKENMKLEAVNPLFPEEVSIATVTAVRGSYLWLQLEGSKKPVPEFIVSVESMNIFPLGWCETNGHPLSTPRRARGHKLRKIAVVQPEKQILSSRTVHEGLKNQLNSPHSVMINGKYCCPKIYFNHRCFSGPYLNKGRIAELPQCVGPGNCVLVLREVLTLLINAAYKPSRVLRELQLDKDSVWHGCGEVLKAKYKGKSYRATVEIVRTADRVTEFCRQTCIKLECCPNLFGPRMVLDTCSENCSVLTKTKYTHYYGKKKNKRIGRPPGGHSNLSCALKKTSKRRKRRKNIFVHKKKRSSASVDNTPVGSPQGSGGEDEDDADDGDDDSLTEGSTSEQQDELHEESEVSEKKSCSPSPTQSEMSTPLPPDTQTDKREAQTSSLSDGENKPPSPKEIRIEVDERLHLDSNPLKWSVADVVRFIRSTDCAPLARIFLDQEIDGQALLLLTLPTVQECMDLKLGPAIKLCHHIERIKFAFYEQFAN.

MBT repeat units follow at residues 20–120 (FSWE…LEAP), 128–232 (SDWS…LQPP), 242–346 (ADWQ…INPP), and 354–451 (FDWA…LSTP). The tract at residues 638–773 (KKKNKRIGRP…SDGENKPPSP (136 aa)) is disordered. Residues 660–679 (KTSKRRKRRKNIFVHKKKRS) show a composition bias toward basic residues. Residues 680–691 (SASVDNTPVGSP) are compositionally biased toward polar residues. A compositionally biased stretch (acidic residues) spans 696–710 (GEDEDDADDGDDDSL). Phosphoserine is present on residues S764 and S772. The region spanning 793 to 861 (WSVADVVRFI…RIKFAFYEQF (69 aa)) is the SAM domain.

Interacts with MYOD1. Component of the SLC (SFMBT1-LSD1-CoREST) corepressor complex, which also contains KDM1A/LSD1 and RCOR1/CoREST. Interacts with KDM1A/LSD1 and RCOR1/CoREST. Interacts with MYOD1. Interacts with L3MBTL3. Highly expressed in the testis, low expression was detected in brain, kidney, heart and lung.

It localises to the nucleus. In terms of biological role, histone-binding protein, which is part of various corepressor complexes. Mediates the recruitment of corepressor complexes to target genes, followed by chromatin compaction and repression of transcription. Plays a role during myogenesis: required for the maintenance of undifferentiated states of myogenic progenitor cells via interaction with MYOD1. Interaction with MYOD1 leads to the recruitment of associated corepressors and silencing of MYOD1 target genes. Part of the SLC complex in germ cells, where it may play a role during spermatogenesis. The polypeptide is Scm-like with four MBT domains protein 1 (Sfmbt1) (Rattus norvegicus (Rat)).